The primary structure comprises 294 residues: UDP-3-O-acyl-N-acetylglucosamine deacetylase (294 aa).

The Zn(2+) site is built by His75, His232, and Asp236. His259 acts as the Proton donor in catalysis.

This sequence belongs to the LpxC family. Zn(2+) is required as a cofactor.

It carries out the reaction a UDP-3-O-[(3R)-3-hydroxyacyl]-N-acetyl-alpha-D-glucosamine + H2O = a UDP-3-O-[(3R)-3-hydroxyacyl]-alpha-D-glucosamine + acetate. It participates in glycolipid biosynthesis; lipid IV(A) biosynthesis; lipid IV(A) from (3R)-3-hydroxytetradecanoyl-[acyl-carrier-protein] and UDP-N-acetyl-alpha-D-glucosamine: step 2/6. In terms of biological role, catalyzes the hydrolysis of UDP-3-O-myristoyl-N-acetylglucosamine to form UDP-3-O-myristoylglucosamine and acetate, the committed step in lipid A biosynthesis. In Sulfurimonas denitrificans (strain ATCC 33889 / DSM 1251) (Thiomicrospira denitrificans (strain ATCC 33889 / DSM 1251)), this protein is UDP-3-O-acyl-N-acetylglucosamine deacetylase.